We begin with the raw amino-acid sequence, 425 residues long: Cell adhesion molecule CEACAM16 (425 aa).

The signal sequence occupies residues 1–20 (MALTGYSWLLLSATFLNVGA). The N-linked (GlcNAc...) asparagine glycan is linked to N36. Ig-like C2-type domains follow at residues 133–218 (PTVL…INLT) and 223–309 (PERV…ASVV). C153 and C201 are oxidised to a cystine. N-linked (GlcNAc...) asparagine glycosylation is present at N216. A disulfide bridge links C252 with C293. N394 is a glycosylation site (N-linked (GlcNAc...) asparagine).

It belongs to the immunoglobulin superfamily. CEA family. Homooligomer; can for homodimers and homotetramers. Interacts with TECTA and TECTB.

It is found in the secreted. Its function is as follows. Required for proper hearing, plays a role in maintaining the integrity of the tectorial membrane. This Homo sapiens (Human) protein is Cell adhesion molecule CEACAM16.